A 230-amino-acid chain; its full sequence is Cytidylate kinase (230 aa).

11–19 (GPAAAGKST) is an ATP binding site.

It belongs to the cytidylate kinase family. Type 1 subfamily.

The protein localises to the cytoplasm. It catalyses the reaction CMP + ATP = CDP + ADP. It carries out the reaction dCMP + ATP = dCDP + ADP. The polypeptide is Cytidylate kinase (Oceanobacillus iheyensis (strain DSM 14371 / CIP 107618 / JCM 11309 / KCTC 3954 / HTE831)).